A 546-amino-acid polypeptide reads, in one-letter code: CTP synthase (546 aa).

An amidoligase domain region spans residues 1 to 266 (MTTRYIFVTG…DELVVKRFSL (266 aa)). Ser-14 is a binding site for CTP. Ser-14 serves as a coordination point for UTP. Residues 15–20 (SLGKGI) and Asp-72 contribute to the ATP site. Mg(2+) contacts are provided by Asp-72 and Glu-140. CTP contacts are provided by residues 147 to 149 (DIE), 187 to 192 (KTKPTQ), and Lys-223. Residues 187–192 (KTKPTQ) and Lys-223 each bind UTP. Position 239 to 241 (239 to 241 (KDV)) interacts with ATP. Residues 291–542 (VIGMVGKYIE…VAAASAHQKR (252 aa)) enclose the Glutamine amidotransferase type-1 domain. L-glutamine is bound at residue Gly-352. The active-site Nucleophile; for glutamine hydrolysis is the Cys-379. L-glutamine is bound by residues 380–383 (LGMQ), Glu-403, and Arg-470. Residues His-515 and Glu-517 contribute to the active site.

The protein belongs to the CTP synthase family. Homotetramer.

The enzyme catalyses UTP + L-glutamine + ATP + H2O = CTP + L-glutamate + ADP + phosphate + 2 H(+). It catalyses the reaction L-glutamine + H2O = L-glutamate + NH4(+). The catalysed reaction is UTP + NH4(+) + ATP = CTP + ADP + phosphate + 2 H(+). Its pathway is pyrimidine metabolism; CTP biosynthesis via de novo pathway; CTP from UDP: step 2/2. Allosterically activated by GTP, when glutamine is the substrate; GTP has no effect on the reaction when ammonia is the substrate. The allosteric effector GTP functions by stabilizing the protein conformation that binds the tetrahedral intermediate(s) formed during glutamine hydrolysis. Inhibited by the product CTP, via allosteric rather than competitive inhibition. In terms of biological role, catalyzes the ATP-dependent amination of UTP to CTP with either L-glutamine or ammonia as the source of nitrogen. Regulates intracellular CTP levels through interactions with the four ribonucleotide triphosphates. The polypeptide is CTP synthase (Shewanella oneidensis (strain ATCC 700550 / JCM 31522 / CIP 106686 / LMG 19005 / NCIMB 14063 / MR-1)).